The primary structure comprises 107 residues: Protein phosphatase 1 regulatory subunit INH3 (107 aa).

Over residues Met-1–Ser-14 the composition is skewed to low complexity. Disordered regions lie at residues Met-1 to Lys-40 and Pro-69 to Asp-107. A compositionally biased stretch (acidic residues) spans Asp-71–Asp-80. Residues Asn-81 to Ser-94 show a composition bias toward basic and acidic residues. Positions Gly-95–Asp-107 are enriched in low complexity.

As to quaternary structure, interacts with protein phosphatase 1. As to expression, expressed in roots, cotyledons, leaves, flowers and embryos.

In terms of biological role, inhibitor of protein-phosphatase 1 (PP1). Binds to and inhibits PP1 activity. Required for early embryogenesis progression. This Arabidopsis thaliana (Mouse-ear cress) protein is Protein phosphatase 1 regulatory subunit INH3.